Here is a 543-residue protein sequence, read N- to C-terminus: Hydroxylamine reductase (543 aa).

[4Fe-4S] cluster contacts are provided by Cys-5, Cys-8, Cys-17, and Cys-23. Positions 250, 274, 318, 410, 438, 463, 498, and 500 each coordinate hybrid [4Fe-2O-2S] cluster. Cys-410 carries the cysteine persulfide modification.

This sequence belongs to the HCP family. [4Fe-4S] cluster serves as cofactor. Hybrid [4Fe-2O-2S] cluster is required as a cofactor.

Its subcellular location is the cytoplasm. It carries out the reaction A + NH4(+) + H2O = hydroxylamine + AH2 + H(+). Functionally, catalyzes the reduction of hydroxylamine to form NH(3) and H(2)O. The polypeptide is Hydroxylamine reductase (Petrotoga mobilis (strain DSM 10674 / SJ95)).